Reading from the N-terminus, the 248-residue chain is Peptidyl-prolyl cis-trans isomerase, chloroplastic (248 aa).

A PPIase cyclophilin-type domain is found at 85–243 (FFDIEIGGES…KPCKIAKSGE (159 aa)). The disordered stretch occupies residues 223-248 (QETSKLDNSPKKPCKIAKSGELPLDG).

Belongs to the cyclophilin-type PPIase family. Highly expressed in leaf.

It is found in the plastid. Its subcellular location is the chloroplast stroma. It catalyses the reaction [protein]-peptidylproline (omega=180) = [protein]-peptidylproline (omega=0). Binds cyclosporin A (CsA). CsA mediates some of its effects via an inhibitory action on PPIase. Functionally, PPIases accelerate the folding of proteins. It catalyzes the cis-trans isomerization of proline imidic peptide bonds in oligopeptides. In Vicia faba (Broad bean), this protein is Peptidyl-prolyl cis-trans isomerase, chloroplastic.